The chain runs to 477 residues: Aspartyl/glutamyl-tRNA(Asn/Gln) amidotransferase subunit B (477 aa).

This sequence belongs to the GatB/GatE family. GatB subfamily. Heterotrimer of A, B and C subunits.

The enzyme catalyses L-glutamyl-tRNA(Gln) + L-glutamine + ATP + H2O = L-glutaminyl-tRNA(Gln) + L-glutamate + ADP + phosphate + H(+). It carries out the reaction L-aspartyl-tRNA(Asn) + L-glutamine + ATP + H2O = L-asparaginyl-tRNA(Asn) + L-glutamate + ADP + phosphate + 2 H(+). Allows the formation of correctly charged Asn-tRNA(Asn) or Gln-tRNA(Gln) through the transamidation of misacylated Asp-tRNA(Asn) or Glu-tRNA(Gln) in organisms which lack either or both of asparaginyl-tRNA or glutaminyl-tRNA synthetases. The reaction takes place in the presence of glutamine and ATP through an activated phospho-Asp-tRNA(Asn) or phospho-Glu-tRNA(Gln). This chain is Aspartyl/glutamyl-tRNA(Asn/Gln) amidotransferase subunit B, found in Legionella pneumophila (strain Corby).